Here is a 640-residue protein sequence, read N- to C-terminus: Threonine--tRNA ligase (640 aa).

The 61-residue stretch at 1-61 folds into the TGS domain; that stretch reads MPIITLPDGS…DRDATLQIIT (61 aa). Residues 242-533 form a catalytic region; sequence DHRRIGKQLD…LIEHYAGAFP (292 aa). 3 residues coordinate Zn(2+): Cys-333, His-384, and His-510.

It belongs to the class-II aminoacyl-tRNA synthetase family. As to quaternary structure, homodimer. The cofactor is Zn(2+).

The protein resides in the cytoplasm. The catalysed reaction is tRNA(Thr) + L-threonine + ATP = L-threonyl-tRNA(Thr) + AMP + diphosphate + H(+). Functionally, catalyzes the attachment of threonine to tRNA(Thr) in a two-step reaction: L-threonine is first activated by ATP to form Thr-AMP and then transferred to the acceptor end of tRNA(Thr). Also edits incorrectly charged L-seryl-tRNA(Thr). The polypeptide is Threonine--tRNA ligase (Pseudomonas aeruginosa (strain LESB58)).